Reading from the N-terminus, the 245-residue chain is tRNA pseudouridine synthase A 1 (245 aa).

Asp-53 (nucleophile) is an active-site residue. Tyr-111 is a binding site for substrate.

Belongs to the tRNA pseudouridine synthase TruA family. Homodimer.

The enzyme catalyses uridine(38/39/40) in tRNA = pseudouridine(38/39/40) in tRNA. In terms of biological role, formation of pseudouridine at positions 38, 39 and 40 in the anticodon stem and loop of transfer RNAs. This Clostridium tetani (strain Massachusetts / E88) protein is tRNA pseudouridine synthase A 1.